We begin with the raw amino-acid sequence, 305 residues long: Ornithine carbamoyltransferase (305 aa).

Residues serine 50–threonine 53, glutamine 77, arginine 101, and histidine 128–glutamine 131 contribute to the carbamoyl phosphate site. L-ornithine contacts are provided by residues asparagine 159, aspartate 222, and serine 226–methionine 227. Residues cysteine 262–leucine 263 and arginine 290 contribute to the carbamoyl phosphate site.

It belongs to the aspartate/ornithine carbamoyltransferase superfamily. OTCase family.

Its subcellular location is the cytoplasm. It carries out the reaction carbamoyl phosphate + L-ornithine = L-citrulline + phosphate + H(+). It participates in amino-acid biosynthesis; L-arginine biosynthesis; L-arginine from L-ornithine and carbamoyl phosphate: step 1/3. In terms of biological role, reversibly catalyzes the transfer of the carbamoyl group from carbamoyl phosphate (CP) to the N(epsilon) atom of ornithine (ORN) to produce L-citrulline. The protein is Ornithine carbamoyltransferase of Synechococcus elongatus (strain ATCC 33912 / PCC 7942 / FACHB-805) (Anacystis nidulans R2).